The primary structure comprises 150 residues: Large ribosomal subunit protein uL16 (150 aa).

This sequence belongs to the universal ribosomal protein uL16 family. As to quaternary structure, component of the small ribosomal subunit. Mature ribosomes consist of a small (40S) and a large (60S) subunit. The 40S subunit contains about 33 different proteins and 1 molecule of RNA (18S). The 60S subunit contains about 49 different proteins and 3 molecules of RNA (25S, 5.8S and 5S).

The sequence is that of Large ribosomal subunit protein uL16 (RPL10) from Nicotiana tabacum (Common tobacco).